Here is a 752-residue protein sequence, read N- to C-terminus: Xanthine dehydrogenase molybdenum-binding subunit (752 aa).

Gln206, Phe237, Arg350, and Ala516 together coordinate Mo-molybdopterin.

The protein belongs to the xanthine dehydrogenase family. As to quaternary structure, heterotrimer of XdhA, XdhB and XdhC. Mo-molybdopterin serves as cofactor.

The catalysed reaction is xanthine + NAD(+) + H2O = urate + NADH + H(+). It carries out the reaction hypoxanthine + NAD(+) + H2O = xanthine + NADH + H(+). It participates in purine metabolism; hypoxanthine degradation; urate from hypoxanthine: step 1/2. The protein operates within purine metabolism; hypoxanthine degradation; urate from hypoxanthine: step 2/2. Presumed to be a dehydrogenase, but possibly an oxidase. Participates in limited purine salvage (requires aspartate) but does not support aerobic growth on purines as the sole carbon source (purine catabolism). In Escherichia coli O157:H7, this protein is Xanthine dehydrogenase molybdenum-binding subunit (xdhA).